Consider the following 62-residue polypeptide: Temporin-1PLa (62 aa).

A signal peptide spans 1–22 (MFTSKKSLLLLFFLGTINLSLC). Positions 23–45 (EEERDADEEERRDDPDEMNVEVE) are excised as a propeptide. Ile-60 carries the isoleucine amide modification.

As to expression, expressed by the skin glands.

The protein resides in the secreted. In terms of biological role, antimicrobial activity against the Gram-positive bacterium S.aureus. In Lithobates palustris (Pickerel frog), this protein is Temporin-1PLa.